A 292-amino-acid chain; its full sequence is MLRRMNTFSGQKLAAVVKELENFAPTSWAEKWDNVGLLIEPHREKQIKKILLTNDLTEPVVKEALEKEAELIISYHPPIFKPLTRITQSHWKERVVAACLANDIALYSPHTAWDKKSGGVNDWLSKAVNIISIRPLEPELGAPPGTGSGRYIETKMELSQVVESLQKRIRNSVHVALAVGHTPKTLIQSVGICAGSGASLLKGIQADLIITGEMSHHEVLEFTHNNTTVLLCNHSNSERGFLHEFCPILAKSLNEECLVFVSEVDKDPLVTVASDINKELSAFVDVYKSTSK.

The protein belongs to the GTP cyclohydrolase I type 2/NIF3 family.

This chain is NIF3-like protein 1 (anon-35F/36A), found in Drosophila melanogaster (Fruit fly).